Consider the following 698-residue polypeptide: MGFAVESRSHVKDILGLINTFNEVKKITVDGTTPITVAHVAALARRHDVKVALEAEQCRARVETCSSWVQRKAEDGADIYGVTTGFGACSSRRTNQLSELQESLIRCLLAGVFTKGCASSVDELPATATRSAMLLRLNSFTYGCSGIRWEVMEALEKLLNSNVSPKVPLRGSVSASGDLIPLAYIAGLLIGKPSVVARIGDDVEVPAPEALSRVGLRPFKLQAKEGLALVNGTSFATALASTVMYDANVLLLLVETLCGMFCEVIFGREEFAHPLIHKVKPHPGQIESAELLEWLLRSSPFQDLSREYYSIDKLKKPKQDRYALRSSPQWLAPLVQTIRDATTTVETEVNSANDNPIIDHANDRALHGANFQGSAVGFYMDYVRIAVAGLGKLLFAQFTELMIEYYSNGLPGNLSLGPDLSVDYGLKGLDIAMAAYSSELQYLANPVTTHVHSAEQHNQDINSLALISARKTEEALDILKLMIASHLTAMCQAVDLRQLEEALVKVVENVVSTLADECGLPNDTKARLLYVAKAVPVYTYLESPCDPTLPLLLGLEQSCFGSILALHKKDGIETDTLVDRLAEFEKRLSDRLENEMTAVRVLYEKKGHKTADNNDALVRIQGSRFLPFYRFVREELDTGVMSARREQTPQEDVQKVFDAIADGRITVPLLHCLQGFLGQPNGCANGVESFQSVWNKSA.

The Proton donor/acceptor role is filled by tyrosine 80. The segment at residues 175 to 177 (ASG) is a cross-link (5-imidazolinone (Ala-Gly)). Serine 176 bears the 2,3-didehydroalanine (Ser) mark. Residues asparagine 231, glutamine 319, arginine 325, asparagine 355, lysine 427, glutamate 455, and asparagine 458 each contribute to the (E)-cinnamate site.

Belongs to the PAL/histidase family. As to quaternary structure, homotetramer. In terms of processing, contains an active site 4-methylidene-imidazol-5-one (MIO), which is formed autocatalytically by cyclization and dehydration of residues Ala-Ser-Gly.

The protein resides in the cytoplasm. The enzyme catalyses L-phenylalanine = L-beta-phenylalanine. The catalysed reaction is L-phenylalanine = (E)-cinnamate + NH4(+). Its pathway is alkaloid biosynthesis; taxol biosynthesis. It participates in phenylpropanoid metabolism; trans-cinnamate biosynthesis; trans-cinnamate from L-phenylalanine: step 1/1. Phenylalanine aminomutase that catalyzes the rearrangement of L-phenylalanine to R-beta-phenylalanine. Catalyzes the first committed step in the biosynthesis of the side chain of the alkaloid taxol (paclitaxel), a widely-used compound with antitumor activity. Also has low phenylalanine ammonia-lyase activity. The protein is Phenylalanine aminomutase (L-beta-phenylalanine forming) (pam) of Taxus canadensis (Canadian yew).